Here is a 227-residue protein sequence, read N- to C-terminus: Transmembrane emp24 domain-containing protein 4 (227 aa).

The N-terminal stretch at 1–29 (MAGVGAGPLRAMGRQALLLLALCATGAQG) is a signal peptide. Topologically, residues 30-194 (LYFHIGETEK…RLTSESTNQR (165 aa)) are lumenal. The GOLD domain occupies 39–137 (KRCFIEEIPD…KLRVHLDIQV (99 aa)). The N-linked (GlcNAc...) asparagine glycan is linked to asparagine 117. The stretch at 147-176 (IAAKDKLTELQLRARQLLDQVEQIQKEQDY) forms a coiled coil. The helical transmembrane segment at 195-212 (VLWWSIAQTVILILTGIW) threads the bilayer. The Cytoplasmic portion of the chain corresponds to 213–227 (QMRHLKSFFEAKKLV). The COPII vesicle coat-binding motif lies at 220–221 (FF). Residues 220–227 (FFEAKKLV) carry the COPI vesicle coat-binding motif.

Belongs to the EMP24/GP25L family.

Its subcellular location is the endoplasmic reticulum membrane. In terms of biological role, involved in vesicular protein trafficking, mainly in the early secretory pathway. targeting. Involved in the maintenance of the Golgi apparatus. Appears to play a role in the biosynthesis of secreted cargo including processing. Involved in endoplasmic reticulum stress response. May play a role in the regulation of heat-shock response and apoptosis. In Homo sapiens (Human), this protein is Transmembrane emp24 domain-containing protein 4 (TMED4).